The following is a 205-amino-acid chain: Ribosomal RNA large subunit methyltransferase E (205 aa).

Residues Gly60, Trp62, Asp80, Asp96, and Asp121 each contribute to the S-adenosyl-L-methionine site. The active-site Proton acceptor is Lys161.

This sequence belongs to the class I-like SAM-binding methyltransferase superfamily. RNA methyltransferase RlmE family.

Its subcellular location is the cytoplasm. The catalysed reaction is uridine(2552) in 23S rRNA + S-adenosyl-L-methionine = 2'-O-methyluridine(2552) in 23S rRNA + S-adenosyl-L-homocysteine + H(+). In terms of biological role, specifically methylates the uridine in position 2552 of 23S rRNA at the 2'-O position of the ribose in the fully assembled 50S ribosomal subunit. This chain is Ribosomal RNA large subunit methyltransferase E, found in Chromobacterium violaceum (strain ATCC 12472 / DSM 30191 / JCM 1249 / CCUG 213 / NBRC 12614 / NCIMB 9131 / NCTC 9757 / MK).